We begin with the raw amino-acid sequence, 668 residues long: 1-deoxy-D-xylulose-5-phosphate synthase (668 aa).

Thiamine diphosphate is bound by residues His105 and 146-148 (AHS). Asp177 is a binding site for Mg(2+). Thiamine diphosphate-binding positions include 178–179 (GA), Asn206, Tyr316, and Glu398. Mg(2+) is bound at residue Asn206.

Belongs to the transketolase family. DXPS subfamily. As to quaternary structure, homodimer. The cofactor is Mg(2+). Requires thiamine diphosphate as cofactor.

The enzyme catalyses D-glyceraldehyde 3-phosphate + pyruvate + H(+) = 1-deoxy-D-xylulose 5-phosphate + CO2. Its pathway is metabolic intermediate biosynthesis; 1-deoxy-D-xylulose 5-phosphate biosynthesis; 1-deoxy-D-xylulose 5-phosphate from D-glyceraldehyde 3-phosphate and pyruvate: step 1/1. Catalyzes the acyloin condensation reaction between C atoms 2 and 3 of pyruvate and glyceraldehyde 3-phosphate to yield 1-deoxy-D-xylulose-5-phosphate (DXP). This Nitrobacter hamburgensis (strain DSM 10229 / NCIMB 13809 / X14) protein is 1-deoxy-D-xylulose-5-phosphate synthase.